The sequence spans 397 residues: Vacuolar protein sorting-associated protein 37A (397 aa).

A Phosphoserine modification is found at Ser18. A VPS37 C-terminal domain is found at 308-397 (KSTFEKKMQR…AMHSQFHAPL (90 aa)).

The protein belongs to the VPS37 family. Component of the ESCRT-I complex (endosomal sorting complex required for transport I) which consists of TSG101, VPS28, a VPS37 protein (VPS37A to -D) and MVB12A or MVB12B in a 1:1:1:1 stoichiometry. Interacts with TSG101, VPS28 and HGS. Component of an ESCRT-I complex (endosomal sorting complex required for transport I) which consists of TSG101, VPS28, VPS37A and UBAP1 in a 1:1:1:1 stoichiometry.

The protein localises to the late endosome membrane. The protein resides in the nucleus. Functionally, component of the ESCRT-I complex, a regulator of vesicular trafficking process. Required for the sorting of endocytic ubiquitinated cargos into multivesicular bodies. May be involved in cell growth and differentiation. The sequence is that of Vacuolar protein sorting-associated protein 37A (Vps37a) from Mus musculus (Mouse).